We begin with the raw amino-acid sequence, 198 residues long: Ribonuclease HII (198 aa).

Positions 1 to 198 (MLCGIDEAGR…QRRSFFVKNL (198 aa)) constitute an RNase H type-2 domain. A divalent metal cation is bound by residues aspartate 6, glutamate 7, and aspartate 112.

It belongs to the RNase HII family. Requires Mn(2+) as cofactor. The cofactor is Mg(2+).

It is found in the cytoplasm. The catalysed reaction is Endonucleolytic cleavage to 5'-phosphomonoester.. Endonuclease that specifically degrades the RNA of RNA-DNA hybrids. This is Ribonuclease HII from Treponema denticola (strain ATCC 35405 / DSM 14222 / CIP 103919 / JCM 8153 / KCTC 15104).